A 269-amino-acid polypeptide reads, in one-letter code: Hydroxyethylthiazole kinase (269 aa).

M42 contributes to the substrate binding site. 2 residues coordinate ATP: R118 and S164. G191 serves as a coordination point for substrate.

Belongs to the Thz kinase family. Mg(2+) is required as a cofactor.

The catalysed reaction is 5-(2-hydroxyethyl)-4-methylthiazole + ATP = 4-methyl-5-(2-phosphooxyethyl)-thiazole + ADP + H(+). It participates in cofactor biosynthesis; thiamine diphosphate biosynthesis; 4-methyl-5-(2-phosphoethyl)-thiazole from 5-(2-hydroxyethyl)-4-methylthiazole: step 1/1. In terms of biological role, catalyzes the phosphorylation of the hydroxyl group of 4-methyl-5-beta-hydroxyethylthiazole (THZ). The chain is Hydroxyethylthiazole kinase from Listeria monocytogenes serotype 4a (strain HCC23).